The primary structure comprises 217 residues: Enolase-phosphatase E1 (217 aa).

Asp9 and Glu11 together coordinate Mg(2+). Substrate-binding positions include 112–113 (SS) and Lys151. Asp176 is a binding site for Mg(2+).

It belongs to the HAD-like hydrolase superfamily. MasA/MtnC family. As to quaternary structure, monomer. Mg(2+) is required as a cofactor.

Its subcellular location is the cytoplasm. It is found in the nucleus. The enzyme catalyses 5-methylsulfanyl-2,3-dioxopentyl phosphate + H2O = 1,2-dihydroxy-5-(methylsulfanyl)pent-1-en-3-one + phosphate. It functions in the pathway amino-acid biosynthesis; L-methionine biosynthesis via salvage pathway; L-methionine from S-methyl-5-thio-alpha-D-ribose 1-phosphate: step 3/6. The protein operates within amino-acid biosynthesis; L-methionine biosynthesis via salvage pathway; L-methionine from S-methyl-5-thio-alpha-D-ribose 1-phosphate: step 4/6. Its function is as follows. Bifunctional enzyme that catalyzes the enolization of 2,3-diketo-5-methylthiopentyl-1-phosphate (DK-MTP-1-P) into the intermediate 2-hydroxy-3-keto-5-methylthiopentenyl-1-phosphate (HK-MTPenyl-1-P), which is then dephosphorylated to form the acireductone 1,2-dihydroxy-3-keto-5-methylthiopentene (DHK-MTPene). The polypeptide is Enolase-phosphatase E1 (Lachancea thermotolerans (strain ATCC 56472 / CBS 6340 / NRRL Y-8284) (Yeast)).